The sequence spans 530 residues: V(D)J recombination-activating protein 2 (530 aa).

The PHD-type; atypical zinc-finger motif lies at 416-485; it reads WIKCCLSCQV…KYFCLDHGGL (70 aa). Cysteine 419, cysteine 423, cysteine 446, histidine 453, histidine 456, cysteine 459, cysteine 479, and histidine 482 together coordinate Zn(2+).

It belongs to the RAG2 family. Component of the RAG complex composed of core components rag1 and rag2.

Its subcellular location is the nucleus. Functionally, core component of the RAG complex, a multiprotein complex that mediates the DNA cleavage phase during V(D)J recombination. V(D)J recombination assembles a diverse repertoire of immunoglobulin and T-cell receptor genes in developing B and T lymphocytes through rearrangement of different V (variable), in some cases D (diversity), and J (joining) gene segments. DNA cleavage by the RAG complex occurs in 2 steps: a first nick is introduced in the top strand immediately upstream of the heptamer, generating a 3'-hydroxyl group that can attack the phosphodiester bond on the opposite strand in a direct transesterification reaction, thereby creating 4 DNA ends: 2 hairpin coding ends and 2 blunt, 5'-phosphorylated ends. In the RAG complex, rag2 is not the catalytic component but is required for all known catalytic activities mediated by RAG1. It probably acts as a sensor of chromatin state that recruits the RAG complex to H3K4me3. This chain is V(D)J recombination-activating protein 2 (rag2), found in Danio rerio (Zebrafish).